A 139-amino-acid chain; its full sequence is ATP synthase epsilon chain (139 aa).

Belongs to the ATPase epsilon chain family. In terms of assembly, F-type ATPases have 2 components, CF(1) - the catalytic core - and CF(0) - the membrane proton channel. CF(1) has five subunits: alpha(3), beta(3), gamma(1), delta(1), epsilon(1). CF(0) has three main subunits: a, b and c.

The protein resides in the cell membrane. Produces ATP from ADP in the presence of a proton gradient across the membrane. This chain is ATP synthase epsilon chain, found in Levilactobacillus brevis (strain ATCC 367 / BCRC 12310 / CIP 105137 / JCM 1170 / LMG 11437 / NCIMB 947 / NCTC 947) (Lactobacillus brevis).